Here is a 3342-residue protein sequence, read N- to C-terminus: Large tegument protein deneddylase (3342 aa).

A deubiquitination activity region spans residues 1-302; it reads MTDSTDSRQA…SRIYGTSDIV (302 aa). The Peptidase C76 domain occupies 78-298; that stretch reads VAVGIRNQFA…ISTVSRIYGT (221 aa). Active-site residues include cysteine 98, aspartate 232, and histidine 234. Residues 472-554 are disordered; it reads RRPLWTPQSS…SPTTSNRGED (83 aa). Low complexity predominate over residues 480–494; that stretch reads SSSENISLDGSSSSL. Residues 514 to 526 are compositionally biased toward polar residues; that stretch reads VTSTESSDVTENV. An interaction with inner tegument protein region spans residues 630 to 656; it reads LYVCMMDIFARLFNYIIENGARTTSDR. Disordered stretches follow at residues 2584–2603, 2654–2987, and 3196–3279; these read DGDA…TYAD, PQIG…SRKH, and PKHD…SSTS. Pro residues-rich tracts occupy residues 2701 to 2743, 2751 to 2777, 2785 to 2799, 2823 to 2837, and 2845 to 2897; these read TPAP…PKPK, KPSP…PKPK, KPTP…SKPK, and KPTP…PKPK. Residues 2911–2947 show a composition bias toward polar residues; sequence NSDSKTSPVPNPNTFSASKIPPTSSIAEETKPCQSNL. Residues 3264–3279 show a composition bias toward low complexity; sequence HVSGSTDTTTDGSSTS.

Belongs to the herpesviridae large tegument protein family. As to quaternary structure, interacts with host CUL1 and CUL4A; these interactions inhibit the E3 ligase activity of cullins. Interacts with inner tegument protein. Interacts with capsid vertex specific component CVC2. Interacts with the major capsid protein/MCP.

The protein localises to the virion tegument. It localises to the host cytoplasm. Its subcellular location is the host nucleus. The catalysed reaction is Thiol-dependent hydrolysis of ester, thioester, amide, peptide and isopeptide bonds formed by the C-terminal Gly of ubiquitin (a 76-residue protein attached to proteins as an intracellular targeting signal).. Its function is as follows. Large tegument protein that plays multiple roles in the viral cycle. During viral entry, remains associated with the capsid while most of the tegument is detached and participates in the capsid transport toward the host nucleus. Plays a role in the routing of the capsid at the nuclear pore complex and subsequent uncoating. Within the host nucleus, acts as a deneddylase and promotes the degradation of nuclear CRLs (cullin-RING ubiquitin ligases) and thereby stabilizes nuclear CRL substrates, while cytoplasmic CRLs remain unaffected. These modifications prevent host cell cycle S-phase progression and create a favorable environment allowing efficient viral genome replication. Participates later in the secondary envelopment of capsids. Indeed, plays a linker role for the association of the outer viral tegument to the capsids together with the inner tegument protein. The sequence is that of Large tegument protein deneddylase (MDV049) from Gallus gallus (Chicken).